We begin with the raw amino-acid sequence, 130 residues long: Small ribosomal subunit protein uS8 (130 aa).

This sequence belongs to the universal ribosomal protein uS8 family. As to quaternary structure, part of the 30S ribosomal subunit. Contacts proteins S5 and S12.

In terms of biological role, one of the primary rRNA binding proteins, it binds directly to 16S rRNA central domain where it helps coordinate assembly of the platform of the 30S subunit. This chain is Small ribosomal subunit protein uS8, found in Shewanella denitrificans (strain OS217 / ATCC BAA-1090 / DSM 15013).